Reading from the N-terminus, the 1211-residue chain is Periplasmic acid trehalase ATC1 (1211 aa).

The Cytoplasmic segment spans residues 1–46; that stretch reads MKRIRSLWFNAEASYSNLNNSPSLRNKNSTGNNSRSKNYRSFSRFD. Residues 47–67 traverse the membrane as a helical segment; the sequence is LINSILLLMMLFLLAIFVTAL. At 68–1211 the chain is on the periplasmic side; sequence YLTKSSRLTY…ATIKEIVLND (1144 aa). A required for cell surface targeting region spans residues 70 to 131; that stretch reads TKSSRLTYSH…NTAYYDDENM (62 aa). N-linked (GlcNAc...) asparagine glycosylation is found at Asn98, Asn207, Asn238, Asn247, Asn255, Asn259, Asn325, Asn370, Asn376, and Asn488. Residue 513-514 participates in substrate binding; that stretch reads WD. N-linked (GlcNAc...) asparagine glycans are attached at residues Asn539, Asn568, Asn628, and Asn638. Residue Glu644 is the Proton donor of the active site. N-linked (GlcNAc...) asparagine glycosylation is found at Asn696 and Asn705. Residue 711–712 participates in substrate binding; sequence KQ. Asn879, Asn897, Asn910, Asn972, Asn990, Asn1031, Asn1049, Asn1064, Asn1147, and Asn1157 each carry an N-linked (GlcNAc...) asparagine glycan.

It belongs to the glycosyl hydrolase 65 family. In terms of processing, glycosylated.

The protein resides in the membrane. It localises to the vacuole lumen. The protein localises to the periplasm. The enzyme catalyses alpha,alpha-trehalose + H2O = alpha-D-glucose + beta-D-glucose. In terms of biological role, periplasmic acid trehalase that catalyzes hydrolysis of the disaccharide trehalose and required for growth on trehalose as carbon source. Growth on trehalose is strictly respiratory. The protein is Periplasmic acid trehalase ATC1 of Saccharomyces cerevisiae (strain CEN.PK113-7D) (Baker's yeast).